Consider the following 141-residue polypeptide: Hemoglobin subunit alpha (141 aa).

Residues 1 to 141 (VLSPDDKKHV…VSTVLTSKYR (141 aa)) enclose the Globin domain. Ser-3 carries the phosphoserine modification. 2 positions are modified to N6-succinyllysine: Lys-7 and Lys-11. Lys-16 carries the N6-acetyllysine; alternate modification. Lys-16 carries the N6-succinyllysine; alternate modification. Tyr-24 carries the phosphotyrosine modification. Ser-35 is subject to Phosphoserine. The residue at position 40 (Lys-40) is an N6-succinyllysine. Ser-49 carries the post-translational modification Phosphoserine. His-58 serves as a coordination point for O2. His-87 serves as a coordination point for heme b. Ser-102 carries the post-translational modification Phosphoserine. Thr-108 is subject to Phosphothreonine. Residues Ser-124 and Ser-131 each carry the phosphoserine modification. Phosphothreonine occurs at positions 134 and 137. Ser-138 carries the post-translational modification Phosphoserine.

Belongs to the globin family. As to quaternary structure, heterotetramer of two alpha chains and two beta chains. Red blood cells.

In terms of biological role, involved in oxygen transport from the lung to the various peripheral tissues. Its function is as follows. Hemopressin acts as an antagonist peptide of the cannabinoid receptor CNR1. Hemopressin-binding efficiently blocks cannabinoid receptor CNR1 and subsequent signaling. This chain is Hemoglobin subunit alpha (HBA), found in Cercocebus atys (Sooty mangabey).